A 354-amino-acid chain; its full sequence is tRNA N6-adenosine threonylcarbamoyltransferase (354 aa).

His-121, His-125, and Tyr-142 together coordinate a divalent metal cation. Substrate-binding positions include 142-146 (YVSGG), Asp-174, Gly-189, Glu-193, and Asn-285. Asp-313 serves as a coordination point for a divalent metal cation.

Belongs to the KAE1 / TsaD family. In terms of assembly, component of the EKC/KEOPS complex composed of at least bud32, cgi121, gon7, kae1 and pcc1; the whole complex dimerizes. A divalent metal cation serves as cofactor.

It localises to the cytoplasm. Its subcellular location is the nucleus. It catalyses the reaction L-threonylcarbamoyladenylate + adenosine(37) in tRNA = N(6)-L-threonylcarbamoyladenosine(37) in tRNA + AMP + H(+). Component of the EKC/KEOPS complex that is required for the formation of a threonylcarbamoyl group on adenosine at position 37 (t(6)A37) in tRNAs that read codons beginning with adenine. The complex is probably involved in the transfer of the threonylcarbamoyl moiety of threonylcarbamoyl-AMP (TC-AMP) to the N6 group of A37. Kae1 likely plays a direct catalytic role in this reaction, but requires other protein(s) of the complex to fulfill this activity. The EKC/KEOPS complex also promotes both telomere uncapping and telomere elongation. The complex is required for efficient recruitment of transcriptional coactivators. This is tRNA N6-adenosine threonylcarbamoyltransferase (gpe-1) from Neurospora crassa (strain ATCC 24698 / 74-OR23-1A / CBS 708.71 / DSM 1257 / FGSC 987).